Here is a 504-residue protein sequence, read N- to C-terminus: Diacylglycerol O-acyltransferase 1B (504 aa).

The segment at 1 to 72 is disordered; the sequence is MAISDEPESV…VNSQQQNEKQ (72 aa). Polar residues predominate over residues 24–41; it reads SATSTAGLFNSPETTTDS. Low complexity predominate over residues 53–65; that stretch reads DDSINSDDAAVNS. 7 helical membrane passes run 108-128, 152-172, 184-204, 209-229, 259-279, 301-321, and 348-368; these read HAGL…RLII, WPLF…FIVE, VVVV…VLVI, SAFV…LKLV, YPYN…TLCY, LIIF…PIVQ, and VWLC…AELL. Residues 375 to 381 carry the FYXDWWN motif motif; the sequence is FYKDWWN. A run of 3 helical transmembrane segments spans residues 416–436, 438–458, and 471–491; these read AAAL…CIAV, CHIF…LVLI, and VGNM…CVLL. Residue H430 is part of the active site.

Belongs to the membrane-bound acyltransferase family. Sterol o-acyltransferase subfamily. As to expression, highly expressed in flowers and pods. Expressed at low levels in roots, stems and leaves.

Its subcellular location is the endoplasmic reticulum membrane. The catalysed reaction is an acyl-CoA + a 1,2-diacyl-sn-glycerol = a triacyl-sn-glycerol + CoA. It functions in the pathway glycerolipid metabolism; triacylglycerol biosynthesis. Major contributors to triacylglycerol (TAG) synthesis and oil accumulation in developing seeds. Catalyzes the acylation of the sn-3 hydroxy group of sn-1,2-diacylglycerol using acyl-CoA. Has a marked preference for oleoyl-CoA and sn-1,2-dioleoylglycerol over vernoloyl-CoA and sn-1,2-divernoloylglycerol. The chain is Diacylglycerol O-acyltransferase 1B from Glycine max (Soybean).